A 274-amino-acid chain; its full sequence is MLSVAARSGPFAPVLSATSRGVAGALRPLVQAAVPATSESPVLDLKRSVLCRESLRGQAAGRPLVASVSLNVPASVRYSHTDIKVPDFSDYRRPEVLDSTKSSKESSEARKGFSYLVTATTTVGVAYAAKNVVSQFVSSMSASADVLAMSKIEIKLSDIPEGKNMAFKWRGKPLFVRHRTKKEIDQEAAVEVSQLRDPQHDLERVKKPEWVILIGVCTHLGCVPIANAGDFGGYYCPCHGSHYDASGRIRKGPAPLNLEVPSYEFTSDDMVIVG.

Residues 79–103 (SHTDIKVPDFSDYRRPEVLDSTKSS) lie on the Mitochondrial matrix side of the membrane. A helical membrane pass occupies residues 104–140 (KESSEARKGFSYLVTATTTVGVAYAAKNVVSQFVSSM). At 141 to 274 (SASADVLAMS…FTSDDMVIVG (134 aa)) the chain is on the mitochondrial intermembrane side. The 86-residue stretch at 187–272 (EAAVEVSQLR…YEFTSDDMVI (86 aa)) folds into the Rieske domain. Positions 217, 219, 236, 239, and 241 each coordinate [2Fe-2S] cluster. C222 and C238 are disulfide-bonded.

The protein belongs to the Rieske iron-sulfur protein family. As to quaternary structure, component of the ubiquinol-cytochrome c oxidoreductase (cytochrome b-c1 complex, complex III, CIII), a multisubunit enzyme composed of 11 subunits. The complex is composed of 3 respiratory subunits cytochrome b, cytochrome c1 and Rieske protein UQCRFS1, 2 core protein subunits UQCRC1/QCR1 and UQCRC2/QCR2, and 6 low-molecular weight protein subunits UQCRH/QCR6, UQCRB/QCR7, UQCRQ/QCR8, UQCR10/QCR9, UQCR11/QCR10 and subunit 9, the cleavage product of Rieske protein UQCRFS1. The complex exists as an obligatory dimer and forms supercomplexes (SCs) in the inner mitochondrial membrane with NADH-ubiquinone oxidoreductase (complex I, CI) and cytochrome c oxidase (complex IV, CIV), resulting in different assemblies (supercomplex SCI(1)III(2)IV(1) and megacomplex MCI(2)III(2)IV(2)). Incorporation of the Rieske protein UQCRFS1 is the penultimate step in complex III assembly. Interacts with TTC19, which is involved in the clearance of UQCRFS1 fragments. In terms of assembly, component of the ubiquinol-cytochrome c oxidoreductase (cytochrome b-c1 complex, complex III, CIII). Subunit 9 corresponds to the mitochondrial targeting sequence (MTS) of Rieske protein UQCRFS1. It is retained after processing and incorporated inside complex III, where it remains bound to the complex and localizes between the 2 core subunits UQCRC1/QCR1 and UQCRC2/QCR2. The cofactor is [2Fe-2S] cluster. In terms of processing, proteolytic processing is necessary for the correct insertion of UQCRFS1 in the complex III dimer. Several fragments are generated during UQCRFS1 insertion, most probably due to the endogenous matrix-processing peptidase (MPP) activity of the 2 core protein subunits UQCRC1/QCR1 and UQCRC2/QCR2, which are homologous to the 2 mitochondrial-processing peptidase (MPP) subunits beta-MPP and alpha-MPP respectively. The action of the protease is also necessary for the clearance of the UQCRFS1 fragments.

The protein resides in the mitochondrion inner membrane. It carries out the reaction a quinol + 2 Fe(III)-[cytochrome c](out) = a quinone + 2 Fe(II)-[cytochrome c](out) + 2 H(+)(out). In terms of biological role, component of the ubiquinol-cytochrome c oxidoreductase, a multisubunit transmembrane complex that is part of the mitochondrial electron transport chain which drives oxidative phosphorylation. The respiratory chain contains 3 multisubunit complexes succinate dehydrogenase (complex II, CII), ubiquinol-cytochrome c oxidoreductase (cytochrome b-c1 complex, complex III, CIII) and cytochrome c oxidase (complex IV, CIV), that cooperate to transfer electrons derived from NADH and succinate to molecular oxygen, creating an electrochemical gradient over the inner membrane that drives transmembrane transport and the ATP synthase. The cytochrome b-c1 complex catalyzes electron transfer from ubiquinol to cytochrome c, linking this redox reaction to translocation of protons across the mitochondrial inner membrane, with protons being carried across the membrane as hydrogens on the quinol. In the process called Q cycle, 2 protons are consumed from the matrix, 4 protons are released into the intermembrane space and 2 electrons are passed to cytochrome c. The Rieske protein is a catalytic core subunit containing a [2Fe-2S] iron-sulfur cluster. It cycles between 2 conformational states during catalysis to transfer electrons from the quinol bound in the Q(0) site in cytochrome b to cytochrome c1. Incorporation of UQCRFS1 is the penultimate step in complex III assembly. Component of the ubiquinol-cytochrome c oxidoreductase (cytochrome b-c1 complex, complex III, CIII). UQCRFS1 undergoes proteolytic processing once it is incorporated in the complex III dimer. One of the fragments, called subunit 9, corresponds to its mitochondrial targeting sequence (MTS). The proteolytic processing is necessary for the correct insertion of UQCRFS1 in the complex III dimer, but the persistence of UQCRFS1-derived fragments may prevent newly imported UQCRFS1 to be processed and assembled into complex III and is detrimental for the complex III structure and function. This Bos taurus (Bovine) protein is Cytochrome b-c1 complex subunit Rieske, mitochondrial (UQCRFS1).